The primary structure comprises 210 residues: MKLPQAFYARDTRTVARALLGKVLVHLDGGVRRAARIVETEAYHGPDDRASHARAGPTPRAAIMFGPPGRAYVYLIYGTSHCMNVVTGPEGFPSAVLLRAAEPIDGCLHSTRGPGNLCRALAIRREHDNGRDLAGDDLFVEDAPPPSEAVVTGPRVNVGYAGAWAARPWRFALRGSPWVSRPPPGAAAARAARAPAAPAPRPRRPRGSGP.

Residues 180–210 are disordered; sequence SRPPPGAAAARAARAPAAPAPRPRRPRGSGP. The segment covering 186–196 has biased composition (low complexity); sequence AAAARAARAPA. Basic residues predominate over residues 201–210; the sequence is RPRRPRGSGP.

This sequence belongs to the DNA glycosylase MPG family.

This Anaeromyxobacter dehalogenans (strain 2CP-1 / ATCC BAA-258) protein is Putative 3-methyladenine DNA glycosylase.